Consider the following 402-residue polypeptide: Multidrug resistance protein MdtH (402 aa).

Helical transmembrane passes span Y13 to I33, S34 to L54, P99 to F116, L139 to L159, Y165 to L185, V214 to M234, A244 to A264, L277 to L297, L340 to G360, and L368 to F388.

It belongs to the major facilitator superfamily. DHA1 family. MdtH (TC 2.A.1.2.21) subfamily.

It localises to the cell inner membrane. In Edwardsiella ictaluri (strain 93-146), this protein is Multidrug resistance protein MdtH.